The following is a 624-amino-acid chain: Probable Xaa-Pro aminopeptidase P (624 aa).

4 residues coordinate Mn(2+): Asp-421, Asp-432, Glu-530, and Glu-544.

The protein belongs to the peptidase M24B family. Mn(2+) serves as cofactor.

It carries out the reaction Release of any N-terminal amino acid, including proline, that is linked to proline, even from a dipeptide or tripeptide.. Its function is as follows. Catalyzes the removal of a penultimate prolyl residue from the N-termini of peptides. The polypeptide is Probable Xaa-Pro aminopeptidase P (AMPP) (Arthroderma otae (strain ATCC MYA-4605 / CBS 113480) (Microsporum canis)).